A 215-amino-acid polypeptide reads, in one-letter code: Translation initiation factor IF-3 (215 aa).

A disordered region spans residues 159–215 (SAEVQQPPKREGRNMIMFLGPRKTPLQKDKPEQATKAERTLPIAKPPGKTAAPAAAN). Residues 184-197 (LQKDKPEQATKAER) are compositionally biased toward basic and acidic residues. A compositionally biased stretch (low complexity) spans 200–215 (PIAKPPGKTAAPAAAN).

This sequence belongs to the IF-3 family. In terms of assembly, monomer.

The protein localises to the cytoplasm. IF-3 binds to the 30S ribosomal subunit and shifts the equilibrium between 70S ribosomes and their 50S and 30S subunits in favor of the free subunits, thus enhancing the availability of 30S subunits on which protein synthesis initiation begins. In Synechococcus sp. (strain RCC307), this protein is Translation initiation factor IF-3.